A 392-amino-acid polypeptide reads, in one-letter code: Probable myosin light chain kinase DDB_G0271550 (392 aa).

Positions 20–278 constitute a Protein kinase domain; sequence YEFGPEIGRG…ASQCIKHPWL (259 aa). ATP is bound by residues 26–34 and lysine 49; that span reads IGRGAFSIV. Aspartate 142 (proton acceptor) is an active-site residue. Residues 317 to 326 are compositionally biased toward polar residues; that stretch reads SQSTPNLHSA. A disordered region spans residues 317–392; it reads SQSTPNLHSA…NNNNNNNNNI (76 aa). Positions 327–392 are enriched in low complexity; it reads NSNTNTNSLS…NNNNNNNNNI (66 aa).

This sequence belongs to the protein kinase superfamily. CAMK Ser/Thr protein kinase family. CaMK subfamily.

It catalyses the reaction L-seryl-[myosin light chain] + ATP = O-phospho-L-seryl-[myosin light chain] + ADP + H(+). The enzyme catalyses L-threonyl-[myosin light chain] + ATP = O-phospho-L-threonyl-[myosin light chain] + ADP + H(+). Functionally, may phosphorylate a specific serine in the N-terminus of a myosin light chain. This chain is Probable myosin light chain kinase DDB_G0271550, found in Dictyostelium discoideum (Social amoeba).